Consider the following 163-residue polypeptide: MLRTVFNKPSVLKSGVNSITKQCRSLHANAYLLNKGNSNGAEGQDDDVTVRIRIPPIKRTGESLDKKRARLIYQSRKRGILETDLLLSRFAAKYLKEMTPEQLEEYDQLLNELDWDIYYWATENYSITPLPDRWKNSNILKQLQEFSKNKDREILSMPDLSKY.

It belongs to the SDHAF2 family. Interacts with the flavoprotein subunit within the SDH catalytic dimer.

It is found in the mitochondrion matrix. In terms of biological role, plays an essential role in the assembly of succinate dehydrogenase (SDH), an enzyme complex (also referred to as respiratory complex II) that is a component of both the tricarboxylic acid (TCA) cycle and the mitochondrial electron transport chain, and which couples the oxidation of succinate to fumarate with the reduction of ubiquinone (coenzyme Q) to ubiquinol. Required for flavinylation (covalent attachment of FAD) of the flavoprotein subunit of the SDH catalytic dimer. In Kluyveromyces lactis (strain ATCC 8585 / CBS 2359 / DSM 70799 / NBRC 1267 / NRRL Y-1140 / WM37) (Yeast), this protein is Succinate dehydrogenase assembly factor 2, mitochondrial.